A 275-amino-acid chain; its full sequence is MSIQICNFPFHPKFALQPRAQRSTRIFARTENDSPQSKTSDQQLNLSVLRFTFGIPGFDESYLPRWIGYGFGSLLLLNHFSASAPISESQMRSEALGLSLAAFSIALPYIGKFLKGSVVEQRSLPEEGEQVFVISSNIGDSLKEDLAWATYVLLRNTSTIAVLISVQGELCVRGYWNCPDQMSKAQLHDWFKKKVDEIGLADVKETLYFPQYAGSALSLDILPDGTRSLFVQPLVQNTNEPQKVNGFLLVASTAGYAYSDKDRAWIGAMAEKFRG.

A chloroplast-targeting transit peptide spans 1 to 19 (MSIQICNFPFHPKFALQPR). At 20-65 (AQRSTRIFARTENDSPQSKTSDQQLNLSVLRFTFGIPGFDESYLPR) the chain is on the stromal side. A helical transmembrane segment spans residues 66 to 86 (WIGYGFGSLLLLNHFSASAPI). Residues 87–93 (SESQMRS) lie on the Lumenal side of the membrane. A helical transmembrane segment spans residues 94–114 (EALGLSLAAFSIALPYIGKFL). At 115-275 (KGSVVEQRSL…IGAMAEKFRG (161 aa)) the chain is on the stromal side.

It is found in the plastid. The protein localises to the chloroplast thylakoid membrane. In terms of biological role, required for the biogenesis and accumulation of native cytochrome b6 in the thylakoid membrane. Controls the conversion of apocytochrome b6 to holocytochrome b6. Required for covalent binding of the c-type heme to cytochrome b6. This chain is Protein COFACTOR ASSEMBLY OF COMPLEX C SUBUNIT B CCB2, chloroplastic, found in Arabidopsis thaliana (Mouse-ear cress).